A 341-amino-acid polypeptide reads, in one-letter code: Dimethylsulfoniopropionate lyase 7 (341 aa).

Composition is skewed to basic and acidic residues over residues 1-10 (MAGKDRKTIE) and 319-328 (ERKLAKDRQK). Disordered regions lie at residues 1 to 24 (MAGK…GGRF) and 319 to 341 (ERKL…AFDA).

This sequence belongs to the aspartate/glutamate racemases family. ALMA1 subfamily. In terms of assembly, homotetramer.

The enzyme catalyses S,S-dimethyl-beta-propiothetin = acrylate + dimethyl sulfide + H(+). Mediates cleavage of dimethylsulfoniopropionate (DMSP) into dimethyl sulfide (DMS) and acrylate. DMS is the principal form by which sulfur is transported from oceans to the atmosphere and is a key component of the ocean sulfur cycle. This Emiliania huxleyi (strain CCMP1516) protein is Dimethylsulfoniopropionate lyase 7.